The sequence spans 144 residues: Large ribosomal subunit protein uL11 (144 aa).

This sequence belongs to the universal ribosomal protein uL11 family. Part of the ribosomal stalk of the 50S ribosomal subunit. Interacts with L10 and the large rRNA to form the base of the stalk. L10 forms an elongated spine to which L12 dimers bind in a sequential fashion forming a multimeric L10(L12)X complex. In terms of processing, one or more lysine residues are methylated.

In terms of biological role, forms part of the ribosomal stalk which helps the ribosome interact with GTP-bound translation factors. The chain is Large ribosomal subunit protein uL11 from Saccharopolyspora erythraea (strain ATCC 11635 / DSM 40517 / JCM 4748 / NBRC 13426 / NCIMB 8594 / NRRL 2338).